Reading from the N-terminus, the 943-residue chain is Leucine--tRNA ligase (943 aa).

Positions 40–51 match the 'HIGH' region motif; the sequence is PYPSGAGLHVGH. The 'KMSKS' region motif lies at 717-721; sequence KMSKS. K720 lines the ATP pocket.

Belongs to the class-I aminoacyl-tRNA synthetase family.

The protein resides in the cytoplasm. It carries out the reaction tRNA(Leu) + L-leucine + ATP = L-leucyl-tRNA(Leu) + AMP + diphosphate. The polypeptide is Leucine--tRNA ligase (Bacteroides fragilis (strain ATCC 25285 / DSM 2151 / CCUG 4856 / JCM 11019 / LMG 10263 / NCTC 9343 / Onslow / VPI 2553 / EN-2)).